Consider the following 180-residue polypeptide: Adenine phosphoribosyltransferase (180 aa).

The protein belongs to the purine/pyrimidine phosphoribosyltransferase family. Homodimer.

The protein resides in the cytoplasm. The enzyme catalyses AMP + diphosphate = 5-phospho-alpha-D-ribose 1-diphosphate + adenine. It participates in purine metabolism; AMP biosynthesis via salvage pathway; AMP from adenine: step 1/1. Catalyzes a salvage reaction resulting in the formation of AMP, that is energically less costly than de novo synthesis. This Rhizobium johnstonii (strain DSM 114642 / LMG 32736 / 3841) (Rhizobium leguminosarum bv. viciae) protein is Adenine phosphoribosyltransferase.